Reading from the N-terminus, the 329-residue chain is Ankyrin repeat and SOCS box protein 5 (329 aa).

ANK repeat units lie at residues 69–98 (ADRS…NVNA), 102–131 (DHVT…NVNA), 135–164 (DGVT…KAQL), 167–196 (CLPS…DVDQ), 200–229 (HLGT…DVQK), and 232–261 (YWDT…DINA). The 52-residue stretch at 278 to 329 (MVERILLQHEATPSSLYQLCRLCIRSYIGKPRLHLIPQLQLPTLLKNFLQYR) folds into the SOCS box domain.

It belongs to the ankyrin SOCS box (ASB) family.

It functions in the pathway protein modification; protein ubiquitination. In terms of biological role, may be a substrate-recognition component of a SCF-like ECS (Elongin-Cullin-SOCS-box protein) E3 ubiquitin-protein ligase complex which mediates the ubiquitination and subsequent proteasomal degradation of target proteins. May play a role in the initiation of arteriogenesis. The sequence is that of Ankyrin repeat and SOCS box protein 5 (ASB5) from Homo sapiens (Human).